A 555-amino-acid chain; its full sequence is Vacuolar fusion protein MON1 homolog A (555 aa).

Over residues 1–12 (MAADMQRKRSSE) the composition is skewed to basic and acidic residues. The segment at 1–87 (MAADMQRKRS…RGPPPLPADM (87 aa)) is disordered. A phosphoserine mark is found at Ser31 and Ser56. Residue Thr61 is modified to Phosphothreonine. The residue at position 91 (Ser91) is a Phosphoserine. Residues 114 to 147 (PGSSEDWLDPPGAVGRPATEPPREGTAEGDEEDA) are disordered.

This sequence belongs to the MON1/SAND family. As to quaternary structure, interacts with CCZ1. Found in a complex with RMC1, CCZ1, MON1A and MON1B. The MON1A-CCZ1B complex interacts with RIMOC1. The MON1A-CCZ1B complex interacts with RAB7A and this interaction is enhanced in the presence of RIMOC1.

Its function is as follows. Plays an important role in membrane trafficking through the secretory apparatus. Not involved in endocytic trafficking to lysosomes. Acts in concert with CCZ1, as a guanine exchange factor (GEF) for RAB7, promotes the exchange of GDP to GTP, converting it from an inactive GDP-bound form into an active GTP-bound form. The chain is Vacuolar fusion protein MON1 homolog A (MON1A) from Macaca fascicularis (Crab-eating macaque).